The sequence spans 260 residues: tRNA pseudouridine synthase C (260 aa).

Asp54 is a catalytic residue.

It belongs to the pseudouridine synthase RluA family.

It carries out the reaction uridine(65) in tRNA = pseudouridine(65) in tRNA. Functionally, responsible for synthesis of pseudouridine from uracil-65 in transfer RNAs. The sequence is that of tRNA pseudouridine synthase C (truC) from Salmonella typhi.